The chain runs to 1248 residues: Structural polyprotein (1248 aa).

The segment covering 1–10 (MEFIPTQTFY) has biased composition (polar residues). The interval 1–104 (MEFIPTQTFY…KKKKPGRRER (104 aa)) is disordered. A host transcription inhibition region spans residues 36–68 (RKAGQLAQLISAVNKLTMRAVPQQKPRKNRKNK). Positions 60-72 (KPRKNRKNKKQKQ) are enriched in basic residues. Positions 61–99 (PRKNRKNKKQKQKQQAPRNNMNQKKQPPKKKPAQKKKKP) match the Nuclear localization signal motif. Low complexity predominate over residues 73–85 (KQQAPRNNMNQKK). Positions 84-114 (KKQPPKKKPAQKKKKPGRRERMCMKIENDCI) are binding to the viral RNA. The segment covering 86–101 (QPPKKKPAQKKKKPGR) has biased composition (basic residues). Residues 99 to 113 (PGRRERMCMKIENDC) form a ribosome-binding region. Cysteine 113 and cysteine 128 form a disulfide bridge. The Peptidase S3 domain occupies 113 to 261 (CIFEVKHEGK…KITPEGAEEW (149 aa)). The active-site Charge relay system is the histidine 139. Positions 144-154 (IDNADLAKLAF) match the Nuclear export signal motif. The segment at 155–160 (KRSSKY) is interaction with spike glycoprotein E2. Residue aspartate 161 is the Charge relay system of the active site. The segment at 183–193 (PEGYYNWHHGA) is dimerization of the capsid protein. Residue serine 213 is the Charge relay system of the active site. The interval 219 to 223 (DNKGR) is dimerization of the capsid protein. Positions 262-274 (SLAIPVMCLLANT) are functions as an uncleaved signal peptide for the precursor of protein E3/E2. Residues 262–692 (SLAIPVMCLL…YYYELYPTMT (431 aa)) are Extracellular-facing. Cystine bridges form between cysteine 269-cysteine 278, cysteine 283-cysteine 287, cysteine 286-cysteine 318, cysteine 344-cysteine 450, cysteine 347-cysteine 353, cysteine 416-cysteine 430, cysteine 478-cysteine 591, cysteine 526-cysteine 550, and cysteine 528-cysteine 545. N-linked (GlcNAc...) asparagine; by host glycosylation is present at asparagine 273. 2 interaction with host Mxra8 receptor regions span residues 351–354 (HSCH) and 387–389 (HDW). 2 interaction with host Mxra8 receptor regions span residues 509-512 (QSGN) and 541-547 (VINNCKV). N-linked (GlcNAc...) asparagine; by host glycosylation is found at asparagine 588 and asparagine 670. The chain crosses the membrane as a helical span at residues 693–713 (VVVVSVASFVLLSMVGVAVGM). At 714–748 (CMCARRRCITPYELTPGATVPFLLSLICCIRTAKA) the chain is on the cytoplasmic side. Residues 716–720 (CARRR) form an interaction with the capsid protein region. S-palmitoyl cysteine; by host attachment occurs at residues cysteine 721, cysteine 741, and cysteine 742. Residues 721-741 (CITPYELTPGATVPFLLSLIC) are transient transmembrane before p62-6K protein processing. The cysteines at positions 721 and 742 are disulfide-linked. Residues 749–763 (ATYQEAAVYLWNEQQ) are Extracellular-facing. A helical transmembrane segment spans residues 764 to 784 (PLFWLQAIIPLAALIVLCNCL). The Cytoplasmic segment spans residues 785-795 (RLLPCCCKTLT). The chain crosses the membrane as a helical span at residues 796 to 816 (FLAVMSVGAHTVSAYEHVTVI). The Extracellular segment spans residues 817 to 1224 (PNTVGVPYKT…AMSWVQKITG (408 aa)). 3 disulfide bridges follow: cysteine 858–cysteine 923, cysteine 871–cysteine 903, and cysteine 877–cysteine 887. The interval 893–910 (VYPFMWGGAYCFCDTENT) is E1 fusion peptide loop. Residues asparagine 950 and asparagine 1079 are each glycosylated (N-linked (GlcNAc...) asparagine; by host). Intrachain disulfides connect cysteine 1068–cysteine 1080, cysteine 1110–cysteine 1185, cysteine 1115–cysteine 1189, and cysteine 1137–cysteine 1179. A helical membrane pass occupies residues 1225–1245 (GVGLVVAVAALILIVVLCVSF). A lipid anchor (S-palmitoyl cysteine; by host) is attached at cysteine 1242. The Cytoplasmic segment spans residues 1246 to 1248 (SRH).

As to quaternary structure, homodimer. Homomultimer. Interacts with host karyopherin KPNA4; this interaction allows the nuclear import of the viral capsid protein. Interacts with spike glycoprotein E2. Interacts with host IRAK1; the interaction leads to inhibition of IRAK1-dependent signaling. In terms of assembly, the precursor of protein E3/E2 and E1 form a heterodimer shortly after synthesis. Interacts with spike glycoprotein E2. The precursor of protein E3/E2 and E1 form a heterodimer shortly after synthesis. Processing of the precursor of protein E3/E2 into E2 and E3 results in a heterodimer of the spike glycoproteins E2 and E1. Spike at virion surface are constituted of three E2-E1 heterodimers. After target cell attachment and endocytosis, E1 change conformation to form homotrimers. Interacts with 6K protein. Interacts with host MXRA8; this interaction mediates virus entry. The interaction involves 2 adjacent E2-E1 heterodimers. As to quaternary structure, interacts with spike glycoprotein E1. Processing of the precursor of protein E3/E2 into E2 and E3 results in a heterodimer of the spike glycoproteins E2 and E1. Spike at virion surface are constituted of a trimer of E2-E1 heterodimers. Interacts with 6K protein. Interacts with host MXRA8; this interaction mediates virus entry. The interaction involves 2 adjacent E2-E1 heterodimers. In terms of assembly, oligomer. Interacts with spike glycoprotein E1. Interacts with spike glycoprotein E2. Post-translationally, structural polyprotein: Specific enzymatic cleavages in vivo yield mature proteins. Capsid protein is auto-cleaved during polyprotein translation, unmasking a signal peptide at the N-terminus of the precursor of E3/E2. The remaining polyprotein is then targeted to the host endoplasmic reticulum, where host signal peptidase cleaves it into pE2, 6K and E1 proteins. pE2 is further processed to mature E3 and E2 by host furin in trans-Golgi vesicle. In terms of processing, palmitoylated via thioester bonds. These palmitoylations may induce disruption of the C-terminus transmembrane. This would result in the reorientation of E2 C-terminus from lumenal to cytoplasmic side. N-glycosylated. Post-translationally, palmitoylated via thioester bonds.

It is found in the virion. The protein localises to the host cytoplasm. It localises to the host cell membrane. Its subcellular location is the host nucleus. The protein resides in the virion membrane. It is found in the host Golgi apparatus. The protein localises to the host trans-Golgi network. It localises to the host endoplasmic reticulum. The catalysed reaction is Autocatalytic release of the core protein from the N-terminus of the togavirus structural polyprotein by hydrolysis of a -Trp-|-Ser- bond.. In terms of biological role, forms an icosahedral capsid with a T=4 symmetry composed of 240 copies of the capsid protein surrounded by a lipid membrane through which penetrate 80 spikes composed of trimers of E1-E2 heterodimers. The capsid protein binds to the viral RNA genome at a site adjacent to a ribosome binding site for viral genome translation following genome release. Possesses a protease activity that results in its autocatalytic cleavage from the nascent structural protein. Following its self-cleavage, the capsid protein transiently associates with ribosomes, and within several minutes the protein binds to viral RNA and rapidly assembles into icosahedric core particles. The resulting nucleocapsid eventually associates with the cytoplasmic domain of the spike glycoprotein E2 at the cell membrane, leading to budding and formation of mature virions. In case of infection, new virions attach to target cells and after clathrin-mediated endocytosis their membrane fuses with the host endosomal membrane. This leads to the release of the nucleocapsid into the cytoplasm, followed by an uncoating event necessary for the genomic RNA to become accessible. The uncoating might be triggered by the interaction of capsid proteins with ribosomes. Binding of ribosomes would release the genomic RNA since the same region is genomic RNA-binding and ribosome-binding. Specifically inhibits interleukin-1 receptor-associated kinase 1/IRAK1-dependent signaling during viral entry, representing a means by which the alphaviruses may evade innate immune detection and activation prior to viral gene expression. Degrades host cyclic GMP-AMP synthase (CGAS) thereby inhibiting the cGAS-STING pathway. Provides the signal sequence for the translocation of the precursor of protein E3/E2 to the host endoplasmic reticulum. Furin-cleaved E3 remains associated with spike glycoprotein E1 and mediates pH protection of the latter during the transport via the secretory pathway. After virion release from the host cell, the assembly protein E3 is gradually released in the extracellular space. Its function is as follows. Plays a role in viral attachment to target host cell, by binding to the cell receptor MXRA8. Synthesized as a p62 precursor which is processed by furin at the cell membrane just before virion budding, giving rise to E2-E1 heterodimer. The p62-E1 heterodimer is stable, whereas E2-E1 is unstable and dissociate at low pH. p62 is processed at the last step, presumably to avoid E1 fusion activation before its final export to cell surface. E2 C-terminus contains a transitory transmembrane that would be disrupted by palmitoylation, resulting in reorientation of the C-terminal tail from lumenal to cytoplasmic side. This step is critical since E2 C-terminus is involved in budding by interacting with capsid proteins. This release of E2 C-terminus in cytoplasm occurs lately in protein export, and precludes premature assembly of particles at the endoplasmic reticulum membrane. Functionally, acts as a viroporin that participates in virus glycoprotein processing and transport to the plasma membrane, cell permeabilization and budding of viral particles. Disrupts the calcium homeostasis of the cell, probably at the endoplasmic reticulum level. This leads to cytoplasmic calcium elevation. Because of its lipophilic properties, the 6K protein is postulated to influence the selection of lipids that interact with the transmembrane domains of the glycoproteins, which, in turn, affects the deformability of the bilayer required for the extreme curvature that occurs as budding proceeds. Present in low amount in virions, about 3% compared to viral glycoproteins. In terms of biological role, class II viral fusion protein. Fusion activity is inactive as long as E1 is bound to E2 in mature virion. After virus attachment to target cell via host MXRA8 and endocytosis, acidification of the endosome induce dissociation of E1/E2 heterodimer and concomitant trimerization of the E1 subunits. This E1 trimer is fusion active, and promotes release of viral nucleocapsid in cytoplasm after endosome and viral membrane fusion. Efficient fusion requires the presence of cholesterol and sphingolipid in the target membrane. The protein is Structural polyprotein of Chikungunya virus (strain Nagpur) (CHIKV).